A 327-amino-acid chain; its full sequence is MSVDAAVVKNEDKYIPTIDLRDYFDAYSEEKRAKVIEQVRKACLEHGFFQVEGHGVPVESQRRMFAACKALFDLPLEKKRRISLYKYSWRRGYEGPGEQQANDPHHGDFERDAKEGFFVGKELPLDQVDFGKGPNVWPPDLAENDFHRPVMEYYEHARKVGFKVMELLAVSLGHPPSILKDFTTDAAMFLKLLRYPAHTWTDTRKFGSGQHTDYGGITILLQDPGQDGLEVWHEATQQWVELPALEDKFVINLGDMVQRWTGGKYKSTLHRVINKTGGERYAVPAFWHGDLDAKNPLDPNDTSDETVLEFIKKKFYKGYGLTDDTSL.

In terms of domain architecture, Fe2OG dioxygenase spans Thr183 to Asp290. Residues His211, Asp213, and His270 each contribute to the Fe cation site. Residue Arg280 participates in 2-oxoglutarate binding.

This sequence belongs to the iron/ascorbate-dependent oxidoreductase family. Fe(2+) serves as cofactor.

The protein operates within secondary metabolite biosynthesis. Functionally, 2-oxoglutarate-dependent dioxygenase; part of the tra gene cluster that produces terrestric acid. The clavatol biosynthesis cluster cla and the terrestric acid cluster tra are both involved in the production of peniphenones and penilactones. The non-reducing PKS claF is responsible for the formation of clavatol from successive condensations of 3 malonyl-CoA units, presumably with a simple acetyl-CoA starter unit, and 2 methylation steps. The esterase claE probably collaborates with claF by catalyzing the hydrolysis of ACP-bound acyl intermediates to free the ACP from stalled intermediates. The clavatol oxidase claD then converts clavatol to hydroxyclavatol. Spontaneous dehydration of hydroxyclavatol leads to the accumulation of the highly active ortho-quinone methide. On the other hand, the PKS-NRPS hybrid traA is involved in the formation of crustosic acid, with the help of traB and traD. The polyketide synthase module (PKS) of traA is responsible for the synthesis of the polyketide backbone via the condensation of an acetyl-CoA starter unit with 3 malonyl-CoA units. The downstream nonribosomal peptide synthetase (NRPS) module then amidates the carboxyl end of the polyketide with L-malic acid. Because traA lacks a designated enoylreductase (ER) domain, the required activity is provided the enoyl reductase traG. Crustosic acid undergoes decarboxylation and isomerization to the terrestric acid, catalyzed by the 2-oxoglutarate-dependent dioxygenase traH. Both acids are further converted to the 2 gamma-butyrolactones (R)-5-methyltetronic acid and (S)-5-carboxylmethyltetronic acid, with involvement of the cytochrome P450 monooxygenase claJ. Spontaneous addition of the methide to these gamma-butyrolactones leads to peniphenone D and penilactone D, which undergo again stereospecific attacking by methide to give penilactones A and B. This chain is 2-oxoglutarate-dependent dioxygenase traH, found in Penicillium crustosum (Blue mold fungus).